Here is a 110-residue protein sequence, read N- to C-terminus: Tyrosine-protein phosphatase 3 (110 aa).

The Tyrosine-protein phosphatase domain occupies 1-110; sequence QKCATIVMVT…NPPHSGPIVV (110 aa). Asp80 contributes to the substrate binding site.

This sequence belongs to the protein-tyrosine phosphatase family.

The enzyme catalyses O-phospho-L-tyrosyl-[protein] + H2O = L-tyrosyl-[protein] + phosphate. The polypeptide is Tyrosine-protein phosphatase 3 (STY-3) (Styela plicata (Wrinkled sea squirt)).